Reading from the N-terminus, the 1029-residue chain is Carbamoyl phosphate synthase large chain (1029 aa).

A carboxyphosphate synthetic domain region spans residues M1–E402. The ATP site is built by R129, R169, G175, G176, E208, I210, E215, G241, V242, H243, Q285, and E299. Positions Q133–V328 constitute an ATP-grasp 1 domain. Mg(2+) contacts are provided by Q285, E299, and N301. 3 residues coordinate Mn(2+): Q285, E299, and N301. An oligomerization domain region spans residues S403 to V546. Residues T547–K929 are carbamoyl phosphate synthetic domain. The ATP-grasp 2 domain maps to N671–V863. Residues R707, Q747, L749, E754, G779, V780, H781, S782, Q822, and E834 each coordinate ATP. Positions 822, 834, and 836 each coordinate Mg(2+). 3 residues coordinate Mn(2+): Q822, E834, and N836. The region spanning S930 to A1028 is the MGS-like domain. Residues S930–S1029 form an allosteric domain region.

Belongs to the CarB family. Composed of two chains; the small (or glutamine) chain promotes the hydrolysis of glutamine to ammonia, which is used by the large (or ammonia) chain to synthesize carbamoyl phosphate. Tetramer of heterodimers (alpha,beta)4. It depends on Mg(2+) as a cofactor. The cofactor is Mn(2+).

The enzyme catalyses hydrogencarbonate + L-glutamine + 2 ATP + H2O = carbamoyl phosphate + L-glutamate + 2 ADP + phosphate + 2 H(+). It carries out the reaction hydrogencarbonate + NH4(+) + 2 ATP = carbamoyl phosphate + 2 ADP + phosphate + 2 H(+). It functions in the pathway amino-acid biosynthesis; L-arginine biosynthesis; carbamoyl phosphate from bicarbonate: step 1/1. The protein operates within pyrimidine metabolism; UMP biosynthesis via de novo pathway; (S)-dihydroorotate from bicarbonate: step 1/3. In terms of biological role, large subunit of the glutamine-dependent carbamoyl phosphate synthetase (CPSase). CPSase catalyzes the formation of carbamoyl phosphate from the ammonia moiety of glutamine, carbonate, and phosphate donated by ATP, constituting the first step of 2 biosynthetic pathways, one leading to arginine and/or urea and the other to pyrimidine nucleotides. The large subunit (synthetase) binds the substrates ammonia (free or transferred from glutamine from the small subunit), hydrogencarbonate and ATP and carries out an ATP-coupled ligase reaction, activating hydrogencarbonate by forming carboxy phosphate which reacts with ammonia to form carbamoyl phosphate. The sequence is that of Carbamoyl phosphate synthase large chain from Deinococcus geothermalis (strain DSM 11300 / CIP 105573 / AG-3a).